A 147-amino-acid chain; its full sequence is Large ribosomal subunit protein uL13 (147 aa).

The disordered stretch occupies residues 126–147 (GGPEHPHAAQNPQPYEITQIAQ).

Belongs to the universal ribosomal protein uL13 family. As to quaternary structure, part of the 50S ribosomal subunit.

This protein is one of the early assembly proteins of the 50S ribosomal subunit, although it is not seen to bind rRNA by itself. It is important during the early stages of 50S assembly. This Cutibacterium acnes (strain DSM 16379 / KPA171202) (Propionibacterium acnes) protein is Large ribosomal subunit protein uL13.